The chain runs to 1060 residues: RNA-binding protein 27 (1060 aa).

3 disordered regions span residues 80 to 143 (PLEP…DGKW), 160 to 278 (YDWR…PKRR), and 319 to 416 (PPPG…PPPL). Composition is skewed to basic and acidic residues over residues 84–102 (VKPEPKPLVQEKEEIKEEV) and 124–143 (SRSESSERRTREKKREDGKW). Positions 165-185 (GRSKSRSKSRGLSRSRSRSRG) are enriched in basic residues. Positions 186 to 211 (RSKDRDPNRNVEHRERSKFKSERNDL) are enriched in basic and acidic residues. 2 stretches are compositionally biased toward low complexity: residues 225–235 (SSEQYSSGAQS) and 255–268 (SWSNYYNNHSSSNS). The segment at 273-301 (PPPKRRCRDYDERGFCVLGDLCQFDHGND) adopts a C3H1-type zinc-finger fold. 2 stretches are compositionally biased toward pro residues: residues 319 to 356 (PPPGLPPPPPPGMLMPPMPGPGPGPGPGPGPGPGPGPG) and 371 to 384 (QPPPSVVLPIPRPP). Residues 387-402 (QSSLINSRDQPGTSAV) show a composition bias toward polar residues. Phosphothreonine is present on T447. R455 is modified (omega-N-methylarginine). A disordered region spans residues 572–594 (LTKKPWLGKQGNNNQSKPGFLRK). The region spanning 600–674 (TKLEVKKIPQ…RFIRVLWHRE (75 aa)) is the RRM domain. Residues 754 to 775 (HASTNQSDTSHLLNQTGGSSGE) are disordered. Over residues 755 to 770 (ASTNQSDTSHLLNQTG) the composition is skewed to polar residues. The stretch at 810–887 (VQEVLKKKQE…KDELKTSSTV (78 aa)) forms a coiled coil. Position 928 is a phosphoserine (S928). A disordered region spans residues 943–982 (GRGKTISSQGRGRGRGRGRGRGSLNHMVVDHRPKALPGGG). Residues S1012 and S1020 each carry the phosphoserine modification. Residues 1014-1060 (HKPKVPSISTETEEEEVKEEETETSDLFLHDDDDEDEDEYESRSWRR) are disordered. Composition is skewed to acidic residues over residues 1024 to 1037 (ETEEEEVKEEETET) and 1044 to 1053 (DDDDEDEDEY).

It is found in the cytoplasm. It localises to the nucleus speckle. Its function is as follows. May be involved in the turnover of nuclear polyadenylated (pA+) RNA. This Mus musculus (Mouse) protein is RNA-binding protein 27.